A 1036-amino-acid chain; its full sequence is UDP-N-acetylglucosamine--peptide N-acetylglucosaminyltransferase 110 kDa subunit (1036 aa).

At Ala-2 the chain carries N-acetylalanine. Phosphoserine; by GSK3-beta; alternate is present on residues Ser-3 and Ser-4. Residues Ser-3 and Ser-4 are each glycosylated (O-linked (GlcNAc) serine; alternate). TPR repeat units follow at residues 11-44 (STGL…EPDN), 79-112 (AEAY…KPDF), 113-146 (IDGY…NPDL), 147-180 (YCVR…QPNF), 181-214 (AVAW…DPNF), 215-248 (LDAY…SPNH), 249-282 (AVVH…QPHF), 283-316 (PDAY…CPTH), 317-350 (ADSL…FPEF), 351-384 (AAAH…SPTF), 385-418 (ADAY…NPAF), and 419-452 (ADAH…KPDF). The O-linked (GlcNAc) serine; by autocatalysis glycan is linked to Ser-389. A Phosphothreonine modification is found at Thr-444. The TPR 13; truncated repeat unit spans residues 453–463 (PDAYCNLAHCL). Positions 454 to 456 (DAY) match the DFP motif motif. Positions 478–493 (KLVSIVAEQLEKNRLP) match the Nuclear localization signal motif. Residue His-498 is the Proton acceptor of the active site. Residues Gln-839, Lys-842, 896-898 (APK), 901-904 (HVRR), 920-922 (HTT), and Asp-925 each bind UDP. Residue Tyr-979 is modified to Phosphotyrosine. Residues 981 to 1000 (KKIRGKVWKQRISSPLFNTK) are required for phosphatidylinositol 3,4,5-triphosphate binding.

Belongs to the glycosyltransferase 41 family. O-GlcNAc transferase subfamily. Monomer; may exist in different oligomerization states in cells. Homotrimer, oligomerizes via TPR repeats 6 and 7. Trimerization is not necessary for activity in vitro, however it increases affinity for UDP-GlcNAc. A heterotrimer consisting of two 110 kDa subunits and one highly related 78 kDa subunit is isolated from liver. Component of a THAP1/THAP3-HCFC1-OGT complex. Component of the NSL complex at least composed of MOF/KAT8, KANSL1, KANSL2, KANSL3, MCRS1, PHF20, OGT1/OGT, WDR5 and HCFC1. Found in a complex with KIF5B, RHOT1, RHOT2 and TRAK1. Found in a complex composed of at least SINHCAF, SIN3A, HDAC1, SAP30, RBBP4, OGT and TET1. Component of a complex composed of KMT2E/MLL5, OGT and USP7; the complex stabilizes KMT2E/MLL5, preventing KMT2E/MLL5 ubiquitination and proteasomal-mediated degradation. Interacts (via TPRs 1-6) with SIN3A; the interaction mediates transcriptional repression in parallel with histone deacetylase. Interacts (via TPR 5-6) with TET1, TET2 and TET3. Interacts (via TPR repeats 6 and 7) with ATXN10. Interacts with NSD2. Interacts with PROSER1; this interaction mediates TET2 O-GlcNAcylation and stability by promoting the interaction between OGT and TET2. In terms of processing, several different immunologically-related forms of this protein are found in different tissues (with apparent molecular weights of 110, 80 and 78 kDa); they are probably the result of alternative splicing and/or proteolysis. O-glycosylated; contains O-GlcNAc. Both p110 and p78 forms are O-glycosylated. Post-translationally, ubiquitinated by the SCF(FBXO31) complex, leading to its proteasomal degradation. In terms of processing, phosphorylation on Ser-3 or Ser-4 by GSK3-beta positively regulates its activity. Phosphorylation at Thr-444 by AMPK promotes nuclear localization. Glycosylated via autocatalysis; O-GlcNAcylation at Ser-389 promotes nuclear localization. As to expression, expressed in brain, heart, liver, thymus, muscle, lung, spleen, uterus and ovary; in the kidney only an immunologically-related 78 kDa band is present, which is also present in liver and muscle. In the pancreas, expressed in both exocrine acinar cells and in endocrine cells of the islets of Langerhans.

The protein localises to the cytoplasm. It localises to the nucleus. The protein resides in the cell membrane. It is found in the mitochondrion membrane. Its subcellular location is the cell projection. The enzyme catalyses L-seryl-[protein] + UDP-N-acetyl-alpha-D-glucosamine = 3-O-(N-acetyl-beta-D-glucosaminyl)-L-seryl-[protein] + UDP + H(+). It catalyses the reaction L-threonyl-[protein] + UDP-N-acetyl-alpha-D-glucosamine = 3-O-(N-acetyl-beta-D-glucosaminyl)-L-threonyl-[protein] + UDP + H(+). It functions in the pathway protein modification; protein glycosylation. Inhibited by UDP, UTP and UDP-GlcNAc; 50 mM NaCl or KCl inhibit activity about 70%. In terms of biological role, catalyzes the transfer of a single N-acetylglucosamine from UDP-GlcNAc to a serine or threonine residue in cytoplasmic and nuclear proteins resulting in their modification with a beta-linked N-acetylglucosamine (O-GlcNAc). Glycosylates a large and diverse number of proteins including histone H2B, AKT1, AMPK, ATG4B, CAPRIN1, EZH2, FNIP1, GSDMD, KRT7, LMNA, LMNB1, LMNB2, RPTOR, HOXA1, PFKL, KMT2E/MLL5, MAPT/TAU, TET2, RBL2, RET, NOD2 and HCFC1. Can regulate their cellular processes via cross-talk between glycosylation and phosphorylation or by affecting proteolytic processing. Involved in insulin resistance in muscle and adipocyte cells via glycosylating insulin signaling components and inhibiting the 'Thr-308' phosphorylation of AKT1, enhancing IRS1 phosphorylation and attenuating insulin signaling. Involved in glycolysis regulation by mediating glycosylation of 6-phosphofructokinase PFKL, inhibiting its activity. Plays a key role in chromatin structure by mediating O-GlcNAcylation of 'Ser-112' of histone H2B: recruited to CpG-rich transcription start sites of active genes via its interaction with TET proteins (TET1, TET2 or TET3). As part of the NSL complex indirectly involved in acetylation of nucleosomal histone H4 on several lysine residues. O-GlcNAcylation of 'Ser-75' of EZH2 increases its stability, and facilitating the formation of H3K27me3 by the PRC2/EED-EZH2 complex. Stabilizes KMT2E/MLL5 by mediating its glycosylation, thereby preventing KMT2E/MLL5 ubiquitination. Regulates circadian oscillation of the clock genes and glucose homeostasis in the liver. Stabilizes clock proteins BMAL1 and CLOCK through O-glycosylation, which prevents their ubiquitination and subsequent degradation. Promotes the CLOCK-BMAL1-mediated transcription of genes in the negative loop of the circadian clock such as PER1/2 and CRY1/2. O-glycosylates HCFC1 and regulates its proteolytic processing and transcriptional activity. Component of a THAP1/THAP3-HCFC1-OGT complex that is required for the regulation of the transcriptional activity of RRM1. Regulates mitochondrial motility in neurons by mediating glycosylation of TRAK1. Promotes autophagy by mediating O-glycosylation of ATG4B. Acts as a regulator of mTORC1 signaling by mediating O-glycosylation of RPTOR and FNIP1: O-GlcNAcylation of RPTOR in response to glucose sufficiency promotes activation of the mTORC1 complex. The sequence is that of UDP-N-acetylglucosamine--peptide N-acetylglucosaminyltransferase 110 kDa subunit (Ogt) from Rattus norvegicus (Rat).